Reading from the N-terminus, the 157-residue chain is Arginine repressor (157 aa).

It belongs to the ArgR family.

The protein localises to the cytoplasm. Its pathway is amino-acid biosynthesis; L-arginine biosynthesis [regulation]. In terms of biological role, regulates arginine biosynthesis genes. This Colwellia psychrerythraea (strain 34H / ATCC BAA-681) (Vibrio psychroerythus) protein is Arginine repressor.